A 199-amino-acid polypeptide reads, in one-letter code: dITP/XTP pyrophosphatase (199 aa).

A substrate-binding site is contributed by Thr-8–Lys-13. Asp-68 acts as the Proton acceptor in catalysis. Asp-68 contacts Mg(2+). Substrate contacts are provided by residues Ser-69, Phe-155 to Asp-158, Lys-177, and His-182 to Arg-183.

Belongs to the HAM1 NTPase family. Homodimer. Mg(2+) is required as a cofactor.

The enzyme catalyses XTP + H2O = XMP + diphosphate + H(+). The catalysed reaction is dITP + H2O = dIMP + diphosphate + H(+). It carries out the reaction ITP + H2O = IMP + diphosphate + H(+). Pyrophosphatase that catalyzes the hydrolysis of nucleoside triphosphates to their monophosphate derivatives, with a high preference for the non-canonical purine nucleotides XTP (xanthosine triphosphate), dITP (deoxyinosine triphosphate) and ITP. Seems to function as a house-cleaning enzyme that removes non-canonical purine nucleotides from the nucleotide pool, thus preventing their incorporation into DNA/RNA and avoiding chromosomal lesions. In Borrelia duttonii (strain Ly), this protein is dITP/XTP pyrophosphatase.